The sequence spans 135 residues: ATP synthase epsilon chain (135 aa).

This sequence belongs to the ATPase epsilon chain family. As to quaternary structure, F-type ATPases have 2 components, CF(1) - the catalytic core - and CF(0) - the membrane proton channel. CF(1) has five subunits: alpha(3), beta(3), gamma(1), delta(1), epsilon(1). CF(0) has three main subunits: a, b and c.

It is found in the cell inner membrane. Its function is as follows. Produces ATP from ADP in the presence of a proton gradient across the membrane. In Bradyrhizobium sp. (strain BTAi1 / ATCC BAA-1182), this protein is ATP synthase epsilon chain.